The sequence spans 368 residues: Chorismate synthase (368 aa).

R46 is an NADP(+) binding site. FMN contacts are provided by residues R124–S126, G284, K299–S303, and R326.

The protein belongs to the chorismate synthase family. FMNH2 is required as a cofactor.

It carries out the reaction 5-O-(1-carboxyvinyl)-3-phosphoshikimate = chorismate + phosphate. The protein operates within metabolic intermediate biosynthesis; chorismate biosynthesis; chorismate from D-erythrose 4-phosphate and phosphoenolpyruvate: step 7/7. Functionally, catalyzes the anti-1,4-elimination of the C-3 phosphate and the C-6 proR hydrogen from 5-enolpyruvylshikimate-3-phosphate (EPSP) to yield chorismate, which is the branch point compound that serves as the starting substrate for the three terminal pathways of aromatic amino acid biosynthesis. This reaction introduces a second double bond into the aromatic ring system. The chain is Chorismate synthase from Pyrobaculum arsenaticum (strain DSM 13514 / JCM 11321 / PZ6).